The following is a 245-amino-acid chain: 8-amino-3,8-dideoxy-manno-octulosonate cytidylyltransferase (245 aa).

Belongs to the KdsB family.

Its subcellular location is the cytoplasm. The catalysed reaction is 8-amino-3,8-dideoxy-alpha-D-manno-octulosonate + CTP = CMP-8-amino-3,8-dideoxy-alpha-D-manno-oct-2-ulosonate + diphosphate. The protein operates within bacterial outer membrane biogenesis; lipopolysaccharide biosynthesis. In terms of biological role, activates KDO8N (a required 8-carbon sugar) for incorporation into bacterial lipopolysaccharide in the Shewanella genus. In Shewanella pealeana (strain ATCC 700345 / ANG-SQ1), this protein is 8-amino-3,8-dideoxy-manno-octulosonate cytidylyltransferase.